The chain runs to 203 residues: GTP cyclohydrolase-2 (203 aa).

Position 49-53 (49-53) interacts with GTP; sequence RIHSE. The Zn(2+) site is built by Cys54, Cys65, and Cys67. GTP contacts are provided by residues Gln70, 92 to 94, and Thr114; that span reads EGR. Asp126 (proton acceptor) is an active-site residue. Arg128 serves as the catalytic Nucleophile. GTP contacts are provided by Thr149 and Lys154.

It belongs to the GTP cyclohydrolase II family. It depends on Zn(2+) as a cofactor.

The enzyme catalyses GTP + 4 H2O = 2,5-diamino-6-hydroxy-4-(5-phosphoribosylamino)-pyrimidine + formate + 2 phosphate + 3 H(+). Its pathway is cofactor biosynthesis; riboflavin biosynthesis; 5-amino-6-(D-ribitylamino)uracil from GTP: step 1/4. In terms of biological role, catalyzes the conversion of GTP to 2,5-diamino-6-ribosylamino-4(3H)-pyrimidinone 5'-phosphate (DARP), formate and pyrophosphate. The chain is GTP cyclohydrolase-2 from Shewanella sp. (strain W3-18-1).